The chain runs to 155 residues: Protein-export protein SecB (155 aa).

This sequence belongs to the SecB family. Homotetramer, a dimer of dimers. One homotetramer interacts with 1 SecA dimer.

The protein resides in the cytoplasm. Functionally, one of the proteins required for the normal export of preproteins out of the cell cytoplasm. It is a molecular chaperone that binds to a subset of precursor proteins, maintaining them in a translocation-competent state. It also specifically binds to its receptor SecA. This Salmonella heidelberg (strain SL476) protein is Protein-export protein SecB.